Here is a 133-residue protein sequence, read N- to C-terminus: Small ribosomal subunit protein uS9 (133 aa).

The span at 102 to 113 (KVEGYLSRDPRA) shows a compositional bias: basic and acidic residues. The tract at residues 102–133 (KVEGYLSRDPRAKERRKYGLKKARKAPQFSKR) is disordered. Residues 114–133 (KERRKYGLKKARKAPQFSKR) are compositionally biased toward basic residues.

The protein belongs to the universal ribosomal protein uS9 family.

This is Small ribosomal subunit protein uS9 from Gloeobacter violaceus (strain ATCC 29082 / PCC 7421).